The sequence spans 255 residues: Syntaxin-23 (255 aa).

The tract at residues 1-31 is disordered; the sequence is MSFQDLEAGRGRSLASSRNINGGGSRQDTTQ. Ser-2 bears the N-acetylserine mark. A compositionally biased stretch (polar residues) spans 14–31; that stretch reads LASSRNINGGGSRQDTTQ. Residues 184–246 enclose the t-SNARE coiled-coil homology domain; it reads EAVIEEREQG…AQGKSHLVRH (63 aa).

It belongs to the syntaxin family. As to quaternary structure, part of the t-SNARE complex. Interacts with RGS1. As to expression, expressed at higher levels in leaves, flowers and stems than in roots.

It is found in the membrane. Its function is as follows. May function in the docking or fusion of transport vesicles with the prevacuolar membrane. This Arabidopsis thaliana (Mouse-ear cress) protein is Syntaxin-23 (SYP23).